A 374-amino-acid polypeptide reads, in one-letter code: Chaperone protein DnaJ (374 aa).

Residues 4 to 69 (SYYEILEITQ…EKRAIYDRYG (66 aa)) form the J domain. Residues 136–213 (GCKKNIDFTY…CKGLGYNESK (78 aa)) form a CR-type zinc finger. Zn(2+)-binding residues include Cys-149, Cys-152, Cys-165, Cys-168, Cys-187, Cys-190, Cys-201, and Cys-204. CXXCXGXG motif repeat units follow at residues 149 to 156 (CKTCNGTG), 165 to 172 (CPKCQGRG), 187 to 194 (CPDCQGSG), and 201 to 208 (CNDCKGLG).

The protein belongs to the DnaJ family. Homodimer. It depends on Zn(2+) as a cofactor.

The protein resides in the cytoplasm. In terms of biological role, participates actively in the response to hyperosmotic and heat shock by preventing the aggregation of stress-denatured proteins and by disaggregating proteins, also in an autonomous, DnaK-independent fashion. Unfolded proteins bind initially to DnaJ; upon interaction with the DnaJ-bound protein, DnaK hydrolyzes its bound ATP, resulting in the formation of a stable complex. GrpE releases ADP from DnaK; ATP binding to DnaK triggers the release of the substrate protein, thus completing the reaction cycle. Several rounds of ATP-dependent interactions between DnaJ, DnaK and GrpE are required for fully efficient folding. Also involved, together with DnaK and GrpE, in the DNA replication of plasmids through activation of initiation proteins. The sequence is that of Chaperone protein DnaJ from Campylobacter jejuni subsp. doylei (strain ATCC BAA-1458 / RM4099 / 269.97).